A 578-amino-acid chain; its full sequence is Proline--tRNA ligase (578 aa).

Belongs to the class-II aminoacyl-tRNA synthetase family. ProS type 1 subfamily. In terms of assembly, homodimer.

It is found in the cytoplasm. It catalyses the reaction tRNA(Pro) + L-proline + ATP = L-prolyl-tRNA(Pro) + AMP + diphosphate. In terms of biological role, catalyzes the attachment of proline to tRNA(Pro) in a two-step reaction: proline is first activated by ATP to form Pro-AMP and then transferred to the acceptor end of tRNA(Pro). As ProRS can inadvertently accommodate and process non-cognate amino acids such as alanine and cysteine, to avoid such errors it has two additional distinct editing activities against alanine. One activity is designated as 'pretransfer' editing and involves the tRNA(Pro)-independent hydrolysis of activated Ala-AMP. The other activity is designated 'posttransfer' editing and involves deacylation of mischarged Ala-tRNA(Pro). The misacylated Cys-tRNA(Pro) is not edited by ProRS. The chain is Proline--tRNA ligase from Burkholderia thailandensis (strain ATCC 700388 / DSM 13276 / CCUG 48851 / CIP 106301 / E264).